We begin with the raw amino-acid sequence, 484 residues long: uncharacterized protein (484 aa).

One can recognise an FAD-binding PCMH-type domain in the interval 47–226; it reads TLPIPAAVVK…TEVTVKIFKF (180 aa).

Belongs to the FAD-binding oxidoreductase/transferase type 4 family.

This is an uncharacterized protein from Escherichia coli (strain K12).